The sequence spans 123 residues: NADH-quinone oxidoreductase subunit A (123 aa).

3 helical membrane passes run 11–31, 68–88, and 93–113; these read YLPI…IMIL, LVAI…PWAI, and IGKI…IGFI.

The protein belongs to the complex I subunit 3 family. As to quaternary structure, NDH-1 is composed of 14 different subunits. Subunits NuoA, H, J, K, L, M, N constitute the membrane sector of the complex.

It is found in the cell inner membrane. The catalysed reaction is a quinone + NADH + 5 H(+)(in) = a quinol + NAD(+) + 4 H(+)(out). Functionally, NDH-1 shuttles electrons from NADH, via FMN and iron-sulfur (Fe-S) centers, to quinones in the respiratory chain. The immediate electron acceptor for the enzyme in this species is believed to be ubiquinone. Couples the redox reaction to proton translocation (for every two electrons transferred, four hydrogen ions are translocated across the cytoplasmic membrane), and thus conserves the redox energy in a proton gradient. In Rickettsia felis (strain ATCC VR-1525 / URRWXCal2) (Rickettsia azadi), this protein is NADH-quinone oxidoreductase subunit A.